An 822-amino-acid chain; its full sequence is Lysine-specific histone demethylase 2 (822 aa).

Over residues 1 to 11 (MATPRGRTKKK) the composition is skewed to basic residues. The disordered stretch occupies residues 1–47 (MATPRGRTKKKASFDHSPDSLPLRSSGRQAKKKATETTDEDEDGGSE). Phosphoserine is present on residues Ser13, Ser17, and Ser26. Residues Cys53, Cys58, Cys65, Cys73, His84, His90, Cys92, Cys95, Cys142, Cys147, Cys169, and Cys185 each coordinate Zn(2+). A CW-type zinc finger spans residues 133 to 193 (DQQLPYWVQC…HCSLPEDLRV (61 aa)). At Ser247 the chain carries Phosphoserine. The segment at 273–292 (YQPNECGKALCVRPDVMELD) is GLYR1-binding. Positions 275–373 (PNECGKALCV…TGVLSVGADQ (99 aa)) constitute an SWIRM domain. Position 383 to 439 (383 to 439 (KSVIIIGAGPAGLAAARQLHNFGIKVTVLEAKDRIGGRVWDDKSFKGVTVGRGAQIV)) interacts with FAD. 3 histone H3-binding regions span residues 438 to 467 (IVNG…RCDL), 487 to 498 (FNALLDVVSEWR), and 538 to 572 (FHLS…AGDH). The tract at residues 564–566 (FFA) is GLYR1-binding. Residues Val598, Glu795, and 803 to 805 (QTV) contribute to the FAD site. The segment at 798–814 (NRHFPQTVTGAYLSGVR) is GLYR1-binding.

It belongs to the flavin monoamine oxidase family. Interacts with its cofactor GLYR1 at nucleosomes; this interaction stimulates H3K4me1 and H3K4me2 demethylation. In contrast to KDM1A, does not form a complex with RCOR1/CoREST. Possible accessory component of the polycomb repressive deubiquitinase (PR-DUB) complex, at least composed of BAP1, one of ASXL1, ASXL2 or (probably) ASXL3 and one of MBD5 or MBD6. The PR-DUB core associates with a number of accessory proteins, including FOXK1, FOXK2, KDM1B, HCFC1 and OGT; KDM1B specifically associates with ASXL2 PR-DUB complexes. It depends on FAD as a cofactor. Zn(2+) is required as a cofactor.

It is found in the nucleus. The protein resides in the chromosome. The catalysed reaction is N(6),N(6)-dimethyl-L-lysyl(4)-[histone H3] + 2 A + 2 H2O = L-lysyl(4)-[histone H3] + 2 formaldehyde + 2 AH2. The enzyme catalyses N(6)-methyl-L-lysyl(4)-[histone H3] + A + H2O = L-lysyl(4)-[histone H3] + formaldehyde + AH2. Its activity is regulated as follows. Histone H3K4me1 and H3K4me2 demethylase activity is inhibited by DNA, this inhibition is released in complex with GLYR1. Histone demethylase that demethylates 'Lys-4' of histone H3, a specific tag for epigenetic transcriptional activation, thereby acting as a corepressor. Required for de novo DNA methylation of a subset of imprinted genes during oogenesis. Acts by oxidizing the substrate by FAD to generate the corresponding imine that is subsequently hydrolyzed. Demethylates both mono- and di-methylated 'Lys-4' of histone H3. Has no effect on tri-methylated 'Lys-4', mono-, di- or tri-methylated 'Lys-9', mono-, di- or tri-methylated 'Lys-27', mono-, di- or tri-methylated 'Lys-36' of histone H3, or on mono-, di- or tri-methylated 'Lys-20' of histone H4. Alone, it is unable to demethylate H3K4me on nucleosomes and requires the presence of GLYR1 to achieve such activity, they form a multifunctional enzyme complex that modifies transcribed chromatin and facilitates Pol II transcription through nucleosomes. This Homo sapiens (Human) protein is Lysine-specific histone demethylase 2.